We begin with the raw amino-acid sequence, 313 residues long: MARWRPDMAEREATPEALYLRRREFLALGAAGAVGLLVARGARAGEPSGAALQVARRVDQAGGETPTPWDSVTGYNNFYELGTSKEDPSRNAGSLRARPWTVTIAGEVKRPQTLDVDALVRMFPPEERVYRMRCVEAWSMVIPWVGFPLADLVRRLEPTSRAKYVAFQTLLDRDQLPGQRRPVLPWPYVEALRIDEATHPLALLAVGLYGRALPGQNGAPLRLVVPWKYGFKGAKSIVRITFLADRPHTTWNDAAPDEYGFYANVNPEVDHPRWSQARERRIGEFFRRKTLPFNGYAAEVAPLYAGLDLRKNY.

The tat-type signal signal peptide spans 1–44 (MARWRPDMAEREATPEALYLRRREFLALGAAGAVGLLVARGARA). Mo-molybdopterin is bound by residues asparagine 76, 79 to 80 (YE), cysteine 134, threonine 169, asparagine 217, arginine 222, and 233 to 235 (GAK).

This sequence belongs to the MsrP family. As to quaternary structure, heterodimer of a catalytic subunit (MsrP) and a heme-binding subunit (MsrQ). Mo-molybdopterin serves as cofactor. In terms of processing, predicted to be exported by the Tat system. The position of the signal peptide cleavage has not been experimentally proven.

It is found in the periplasm. It catalyses the reaction L-methionyl-[protein] + a quinone + H2O = L-methionyl-(S)-S-oxide-[protein] + a quinol. It carries out the reaction L-methionyl-[protein] + a quinone + H2O = L-methionyl-(R)-S-oxide-[protein] + a quinol. Functionally, part of the MsrPQ system that repairs oxidized periplasmic proteins containing methionine sulfoxide residues (Met-O), using respiratory chain electrons. Thus protects these proteins from oxidative-stress damage caused by reactive species of oxygen and chlorine generated by the host defense mechanisms. MsrPQ is essential for the maintenance of envelope integrity under bleach stress, rescuing a wide series of structurally unrelated periplasmic proteins from methionine oxidation. The catalytic subunit MsrP is non-stereospecific, being able to reduce both (R-) and (S-) diastereoisomers of methionine sulfoxide. This chain is Protein-methionine-sulfoxide reductase catalytic subunit MsrP, found in Anaeromyxobacter sp. (strain K).